Reading from the N-terminus, the 387-residue chain is MTSHPVFIDLSLDEQVQELRKYFKKLGAEISSEKSNKGVEDDLHKIIGVCDVCFKDGEPSQIDGILNSIVSIMITIPLDRGENIVLAYCEKMTKAPNLPLGKVCLQSLWRLFNNLDTASPLRYHVYYHLVQVAKQCEQVLEVFSGVDQLKSQFANCPPSSEQMQKLYRLLHDVTKDTNLELSSKVMIELLGTYTADNACVAREDAMKCIVTALADPNTFLLDPLLSLKPVRFLEGDLIHDLLSIFVSEKLPAYVQFYEDHREFVNSQGLNHEQNMKKMRLLTFMQLAESSPEMTFETLTKELQINEDEVEPFVIEVLKTKLVRARLDQANQKVHISSTMHRTFGAPQWEQLRDLLQAWKENLSTVREGLTSVSSAQLDLARSQKLIH.

Positions 181–340 (LSSKVMIELL…QKVHISSTMH (160 aa)) constitute a PCI domain.

This sequence belongs to the eIF-3 subunit M family. In terms of assembly, component of the eukaryotic translation initiation factor 3 (eIF-3) complex. The eIF-3 complex interacts with pix.

It is found in the cytoplasm. It localises to the golgi apparatus. Functionally, component of the eukaryotic translation initiation factor 3 (eIF-3) complex, which is involved in protein synthesis of a specialized repertoire of mRNAs and, together with other initiation factors, stimulates binding of mRNA and methionyl-tRNAi to the 40S ribosome. The eIF-3 complex specifically targets and initiates translation of a subset of mRNAs involved in cell proliferation. The polypeptide is Eukaryotic translation initiation factor 3 subunit M (Drosophila sechellia (Fruit fly)).